Consider the following 570-residue polypeptide: Sulfite reductase [NADPH] hemoprotein beta-component (570 aa).

Residues C434, C440, C479, and C483 each coordinate [4Fe-4S] cluster. C483 is a siroheme binding site.

It belongs to the nitrite and sulfite reductase 4Fe-4S domain family. In terms of assembly, alpha(8)-beta(8). The alpha component is a flavoprotein, the beta component is a hemoprotein. Siroheme serves as cofactor. The cofactor is [4Fe-4S] cluster.

The catalysed reaction is hydrogen sulfide + 3 NADP(+) + 3 H2O = sulfite + 3 NADPH + 4 H(+). It participates in sulfur metabolism; hydrogen sulfide biosynthesis; hydrogen sulfide from sulfite (NADPH route): step 1/1. Functionally, component of the sulfite reductase complex that catalyzes the 6-electron reduction of sulfite to sulfide. This is one of several activities required for the biosynthesis of L-cysteine from sulfate. The sequence is that of Sulfite reductase [NADPH] hemoprotein beta-component from Escherichia coli (strain B / BL21-DE3).